The chain runs to 198 residues: T-cell surface glycoprotein CD3 epsilon chain (198 aa).

The N-terminal stretch at 1–21 (MRAGTLWRVLALWLLSVAAWG) is a signal peptide. The Extracellular segment spans residues 22-120 (QEDDDHADDY…EACMEVDLTT (99 aa)). The Ig-like domain maps to 28 to 106 (ADDYTQKLFT…KENEHILYLK (79 aa)). A disulfide bond links Cys-49 and Cys-90. The helical transmembrane segment at 121–141 (VASIVVADVCVTLGLLLLVYY) threads the bilayer. Topologically, residues 142-198 (WSKNRKAKCKPVTRGAGAGGRPRGQNKERPPPVPNPDYEPIRKGQRDLYSGLNQRGI) are cytoplasmic. The interval 153–198 (VTRGAGAGGRPRGQNKERPPPVPNPDYEPIRKGQRDLYSGLNQRGI) is disordered. An NUMB-binding region region spans residues 166–183 (QNKERPPPVPNPDYEPIR). Residues 169–196 (ERPPPVPNPDYEPIRKGQRDLYSGLNQR) enclose the ITAM domain. Residues 170–177 (RPPPVPNP) are proline-rich sequence. A phosphotyrosine mark is found at Tyr-179 and Tyr-190.

In terms of assembly, the TCR-CD3 complex is composed of a CD3D/CD3E and a CD3G/CD3E heterodimers that preferentially associate with TCRalpha and TCRbeta, respectively, to form TCRalpha/CD3E/CD3G and TCRbeta/CD3G/CD3E trimers. In turn, the hexamer interacts with CD3Z homodimer to form the TCR-CD3 complex. Alternatively, TCRalpha and TCRbeta can be replaced by TCRgamma and TCRdelta. Interacts with CD6. Interacts (via Proline-rich sequence) with NCK1; the interaction is ligand dependent but independent of tyrosine kinase activation. Post-translationally, phosphorylated on Tyr residues after T-cell receptor triggering by LCK in association with CD4/CD8.

The protein localises to the cell membrane. Its function is as follows. Part of the TCR-CD3 complex present on T-lymphocyte cell surface that plays an essential role in adaptive immune response. When antigen presenting cells (APCs) activate T-cell receptor (TCR), TCR-mediated signals are transmitted across the cell membrane by the CD3 chains CD3D, CD3E, CD3G and CD3Z. All CD3 chains contain immunoreceptor tyrosine-based activation motifs (ITAMs) in their cytoplasmic domain. Upon TCR engagement, these motifs become phosphorylated by Src family protein tyrosine kinases LCK and FYN, resulting in the activation of downstream signaling pathways. In addition of this role of signal transduction in T-cell activation, CD3E plays an essential role in correct T-cell development. Also participates in internalization and cell surface down-regulation of TCR-CD3 complexes via endocytosis sequences present in CD3E cytosolic region. In addition to its role as a TCR coreceptor, it serves as a receptor for ITPRIPL1. Ligand recognition inhibits T-cell activation by promoting interaction with NCK1, which prevents CD3E-ZAP70 interaction and blocks the ERK-NFkB signaling cascade and calcium influx. This chain is T-cell surface glycoprotein CD3 epsilon chain (CD3E), found in Oryctolagus cuniculus (Rabbit).